The following is a 96-amino-acid chain: NADH-ubiquinone oxidoreductase chain 4L (96 aa).

3 consecutive transmembrane segments (helical) span residues 1 to 21, 24 to 44, and 57 to 77; these read MNPTTFIISFMIALSGLAFYQ, LLSLFLCLEGMALSVFCLMAI, and LPLIMLTFSVCEAGLSLVLLV.

It belongs to the complex I subunit 4L family.

It localises to the mitochondrion membrane. It carries out the reaction a ubiquinone + NADH + 5 H(+)(in) = a ubiquinol + NAD(+) + 4 H(+)(out). Functionally, core subunit of the mitochondrial membrane respiratory chain NADH dehydrogenase (Complex I) which catalyzes electron transfer from NADH through the respiratory chain, using ubiquinone as an electron acceptor. Part of the enzyme membrane arm which is embedded in the lipid bilayer and involved in proton translocation. The protein is NADH-ubiquinone oxidoreductase chain 4L (MT-ND4L) of Myxine glutinosa (Atlantic hagfish).